The chain runs to 310 residues: UDP-N-acetylenolpyruvoylglucosamine reductase (310 aa).

Positions 34-211 (TGGPAQCVYV…REDMGKIAQE (178 aa)) constitute an FAD-binding PCMH-type domain. Residue Arg-177 is part of the active site. Residue Ser-225 is the Proton donor of the active site. Glu-295 is an active-site residue.

This sequence belongs to the MurB family. It depends on FAD as a cofactor.

It is found in the cytoplasm. It carries out the reaction UDP-N-acetyl-alpha-D-muramate + NADP(+) = UDP-N-acetyl-3-O-(1-carboxyvinyl)-alpha-D-glucosamine + NADPH + H(+). It functions in the pathway cell wall biogenesis; peptidoglycan biosynthesis. In terms of biological role, cell wall formation. The protein is UDP-N-acetylenolpyruvoylglucosamine reductase of Beijerinckia indica subsp. indica (strain ATCC 9039 / DSM 1715 / NCIMB 8712).